The chain runs to 270 residues: BPI fold-containing family A member 5 (270 aa).

Positions 1–19 are cleaved as a signal peptide; that stretch reads MFLAGSFIVLCGLLAQSTA. C196 and C238 are disulfide-bonded.

It belongs to the BPI/LBP/Plunc superfamily. Plunc family. Expressed in interpapillar epithelium of the anterior part of the tongue.

It localises to the secreted. Its function is as follows. May play a role in innate immunity in the oral cavity. The sequence is that of BPI fold-containing family A member 5 (Bpifa5) from Mus musculus (Mouse).